Consider the following 219-residue polypeptide: uncharacterized protein (219 aa).

This is an uncharacterized protein from Mycoplasma genitalium (strain ATCC 33530 / DSM 19775 / NCTC 10195 / G37) (Mycoplasmoides genitalium).